The chain runs to 287 residues: N-methyltransferase verN (287 aa).

This sequence belongs to the methyltransferase superfamily. LaeA methyltransferase family.

It participates in mycotoxin biosynthesis. Its function is as follows. N-methyltransferase; part of the gene cluster that mediates the biosynthesis of 11'-deoxyverticillin A, one of the dimeric epipolythiodioxopiperazines (ETPs) from the verticillin family that act as mycotoxins. 11'-deoxyverticillin A is required for normal conidiation. The nonribosomal peptide synthetase verP is speculated to be responsible for condensation of amino acids to form the carbon skeleton of verticillin, whereas the cluster-specific tailoring enzymes are involved in further modifications leading to the production of 11'-deoxyverticillin A. This Clonostachys rogersoniana protein is N-methyltransferase verN.